The chain runs to 366 residues: D-alanine--D-alanine ligase (366 aa).

The ATP-grasp domain occupies 148–357; that stretch reads KMTFEQAGLA…FPELVDRLIQ (210 aa). 184–239 lines the ATP pocket; it reads EAALGYPAFVKPANLGSSVGIAKVRSRQELEAALDNAASYDRRLVVEAGVVAREVE. Mg(2+) is bound by residues aspartate 310, glutamate 324, and asparagine 326.

It belongs to the D-alanine--D-alanine ligase family. Requires Mg(2+) as cofactor. It depends on Mn(2+) as a cofactor.

It is found in the cytoplasm. The enzyme catalyses 2 D-alanine + ATP = D-alanyl-D-alanine + ADP + phosphate + H(+). The protein operates within cell wall biogenesis; peptidoglycan biosynthesis. In terms of biological role, cell wall formation. The sequence is that of D-alanine--D-alanine ligase from Nostoc punctiforme (strain ATCC 29133 / PCC 73102).